The following is a 121-amino-acid chain: Small ribosomal subunit protein uS13 (121 aa).

Positions 94 to 121 are disordered; that stretch reads GLPVRGQNTKNNSRTRKGPRRTVANKKK. The segment covering 106 to 121 has biased composition (basic residues); the sequence is SRTRKGPRRTVANKKK.

Belongs to the universal ribosomal protein uS13 family. In terms of assembly, part of the 30S ribosomal subunit. Forms a loose heterodimer with protein S19. Forms two bridges to the 50S subunit in the 70S ribosome.

Its function is as follows. Located at the top of the head of the 30S subunit, it contacts several helices of the 16S rRNA. In the 70S ribosome it contacts the 23S rRNA (bridge B1a) and protein L5 of the 50S subunit (bridge B1b), connecting the 2 subunits; these bridges are implicated in subunit movement. Contacts the tRNAs in the A and P-sites. This chain is Small ribosomal subunit protein uS13, found in Exiguobacterium sibiricum (strain DSM 17290 / CCUG 55495 / CIP 109462 / JCM 13490 / 255-15).